Here is a 136-residue protein sequence, read N- to C-terminus: Histone H3.3 (136 aa).

The segment at 1-42 (MARTKQTARKSTGGKAPRKQLASKAARKSAPVSGGVKKPHRY) is disordered. Lys5 is subject to N6,N6,N6-trimethyllysine; alternate. The residue at position 5 (Lys5) is an N6,N6-dimethyllysine; alternate. Residues Lys5 and Lys10 each carry the N6-methyllysine; alternate modification. At Lys10 the chain carries N6-acetyllysine; alternate. Ser11 carries the post-translational modification Phosphoserine. At Lys15 the chain carries N6,N6-dimethyllysine; alternate. N6-acetyllysine; alternate occurs at positions 15, 19, 24, 28, and 37. N6-methyllysine; alternate is present on residues Lys19, Lys24, Lys28, and Lys37. N6,N6,N6-trimethyllysine; alternate is present on residues Lys28 and Lys37. An N6,N6-dimethyllysine; alternate mark is found at Lys28 and Lys37. An N6-acetyllysine mark is found at Lys57 and Lys65. Lys80 carries the post-translational modification N6,N6,N6-trimethyllysine; alternate. Lys80 bears the N6,N6-dimethyllysine; alternate mark. At Lys80 the chain carries N6-methyllysine; alternate.

This sequence belongs to the histone H3 family. As to quaternary structure, the nucleosome is a histone octamer containing two molecules each of H2A, H2B, H3 and H4 assembled in one H3-H4 heterotetramer and two H2A-H2B heterodimers. The octamer wraps approximately 147 bp of DNA. In terms of processing, phosphorylated to form H3S10ph. H3S10ph promotes subsequent H3K14ac formation and is required for transcriptional activation through TBP recruitment to the promoters. Post-translationally, mono-, di- and trimethylated by the COMPASS complex to form H3K4me1/2/3. H3K4me activates gene expression by regulating transcription elongation and plays a role in telomere length maintenance. H3K4me enrichment correlates with transcription levels, and occurs in a 5' to 3' gradient with H3K4me3 enrichment at the 5'-end of genes, shifting to H3K4me2 and then H3K4me1. Methylated by SET2 to form H3K36me. H3K36me represses gene expression. Methylated by DOT1 to form H3K79me. H3K79me is required for association of SIR proteins with telomeric regions and for telomeric silencing. The COMPASS-mediated formation of H3K4me2/3 and the DOT1-mediated formation of H3K79me require H2BK123ub1. Acetylation of histone H3 leads to transcriptional activation. H3K14ac formation by GCN5 is promoted by H3S10ph. H3K14ac can also be formed by ESA1. H3K56ac formation occurs predominantly in newly synthesized H3 molecules during G1, S and G2/M of the cell cycle and may be involved in DNA repair.

The protein resides in the nucleus. It is found in the chromosome. In terms of biological role, core component of nucleosome. Nucleosomes wrap and compact DNA into chromatin, limiting DNA accessibility to the cellular machineries which require DNA as a template. Histones thereby play a central role in transcription regulation, DNA repair, DNA replication and chromosomal stability. DNA accessibility is regulated via a complex set of post-translational modifications of histones, also called histone code, and nucleosome remodeling. This chain is Histone H3.3 (HHT3), found in Lodderomyces elongisporus (strain ATCC 11503 / CBS 2605 / JCM 1781 / NBRC 1676 / NRRL YB-4239) (Yeast).